Here is a 239-residue protein sequence, read N- to C-terminus: Fatty acid metabolism regulator protein (239 aa).

Residues 6-74 enclose the HTH gntR-type domain; the sequence is QSPAGFAEEY…HGKPTKINNF (69 aa). Positions 34–53 form a DNA-binding region, H-T-H motif; the sequence is ERELSELIGVTRTTLREVLQ.

Homodimer.

It is found in the cytoplasm. In terms of biological role, multifunctional regulator of fatty acid metabolism. The chain is Fatty acid metabolism regulator protein from Pectobacterium carotovorum subsp. carotovorum (strain PC1).